We begin with the raw amino-acid sequence, 1603 residues long: GATOR1 complex protein DEPDC5 (1603 aa).

3 disordered regions span residues 427–450 (GKKP…KESE), 484–527 (VRER…SSLG), and 696–720 (LSNS…VSTS). The segment covering 430–439 (PASEKAKNGR) has biased composition (basic and acidic residues). Residues 494–508 (SASSCDVSSSPSLPS) show a composition bias toward low complexity. Position 505 is a phosphoserine (Ser-505). Polar residues-rich tracts occupy residues 518-527 (SQASDDSSLG) and 696-707 (LSNSGAGMNPRT). The residue at position 1002 (Ser-1002) is a Phosphoserine; by PIM1. Over residues 1135-1153 (DRGNSQTFGNSQNIGEQGY) the composition is skewed to polar residues. Positions 1135–1165 (DRGNSQTFGNSQNIGEQGYSSTNSSDSSSQQ) are disordered. A compositionally biased stretch (low complexity) spans 1154–1165 (SSTNSSDSSSQQ). Residues 1187 to 1262 (PSTGVQLLSE…YGFYFYKIVT (76 aa)) form the DEP domain. The residue at position 1530 (Ser-1530) is a Phosphoserine; by PKB/AKT1 and PIM1.

Belongs to the IML1 family. As to quaternary structure, within the GATOR complex, component of the GATOR1 subcomplex, made of DEPDC5, NPRL2 and NPRL3. GATOR1 mediates the strong interaction of the GATOR complex with small GTPases Rag (RagA/RRAGA, RagB/RRAGB, RagC/RRAGC and/or RagD/RRAGD) heterodimers. Interacts with SAMTOR; interaction is direct and takes place in presence of methionine, leading to inhibit the activity of the GATOR1 complex. Phosphorylation at Ser-1002 and Ser-1530 by AKT1 and PIM1 inhibit the activity of DEPDC5, releasing inhibition of the mTORC1 pathway. In terms of processing, ubiquitinated. Amino acid-induced 'Lys-48'-linked polyubiquitination of DEPDC5 by the BCR(KLHL22) ubiquitin ligase complex leads to DEPDC5 proteasomal degradation and inhibition of the GATOR1 complex. Ubiquitination may occur at multiple lysines. Expressed in developing and adult brain.

Its subcellular location is the lysosome membrane. The protein resides in the cytoplasm. The protein localises to the cytosol. It is found in the perinuclear region. In terms of biological role, as a component of the GATOR1 complex functions as an inhibitor of the amino acid-sensing branch of the mTORC1 pathway. In response to amino acid depletion, the GATOR1 complex has GTPase activating protein (GAP) activity and strongly increases GTP hydrolysis by RagA/RRAGA (or RagB/RRAGB) within heterodimeric Rag complexes, thereby turning them into their inactive GDP-bound form, releasing mTORC1 from lysosomal surface and inhibiting mTORC1 signaling. In the presence of abundant amino acids, the GATOR1 complex is negatively regulated by GATOR2, the other GATOR subcomplex, in this amino acid-sensing branch of the TORC1 pathway. Within the GATOR1 complex, DEPDC5 mediates direct interaction with the nucleotide-binding pocket of small GTPases Rag (RagA/RRAGA, RagB/RRAGB, RagC/RRAGC and/or RagD/RRAGD) and coordinates their nucleotide loading states by promoting RagA/RRAGA or RagB/RRAGB into their GDP-binding state and RagC/RRAGC or RagD/RRAGD into their GTP-binding state. However, it does not execute the GAP activity, which is mediated by NPRL2. This Homo sapiens (Human) protein is GATOR1 complex protein DEPDC5.